Here is a 543-residue protein sequence, read N- to C-terminus: MAKRIIYNEQARRALERGIDILAESVAVTLGPKGRNVVLEKKFGAPQIINDGVTIAKEIELEDHIENTGVALIRQAASKTNDAAGDGTTTATVLAHAMVKAGLKNVAAGANAITLKKGIDKATEFLVEKIKDHSKPISDSNAIAQCGTIAAGNDEEVGKMIADAMDKVGKEGVISLEEGKSMTTELEVTEGMRFDKGYISPYFATDTERMEAVLDEPYILLTDKKIGLVQDLVPVLEQVAKTGKPLLIIAEDIEKEALATLVVNRLRGVLNVAAVKAPGFGDRRKAMLEDMAVLTNGQLITEDAGLKLENATLDMLGTSRRVTINKDTSTIVAEGNEVAVNARCEQIKKQMDETDSTYDKEKLQERLAKLSGGVAVVKVGAATETEMKDKKLRLEDAINATKAAVEEGIVPGGGTTLAHLAPALGDWSSSNLSGEELIGANIVEAALTSPLMRIAENAGANGAVVAENVKSKPVNDGYNAATGEYVDMLSAGIVDPAKVTRSGLQNAASIAGMVLTTECIVADLPEKKDSSSAGGGMGGDFDY.

Residues 29 to 32 (TLGP), 86 to 90 (DGTTT), Gly-413, 479 to 481 (NAA), and Asp-495 each bind ATP.

It belongs to the chaperonin (HSP60) family. As to quaternary structure, forms a cylinder of 14 subunits composed of two heptameric rings stacked back-to-back. Interacts with the co-chaperonin GroES.

It is found in the cytoplasm. It carries out the reaction ATP + H2O + a folded polypeptide = ADP + phosphate + an unfolded polypeptide.. Functionally, together with its co-chaperonin GroES, plays an essential role in assisting protein folding. The GroEL-GroES system forms a nano-cage that allows encapsulation of the non-native substrate proteins and provides a physical environment optimized to promote and accelerate protein folding. This chain is Chaperonin GroEL 1, found in Prochlorococcus marinus (strain NATL2A).